Here is a 170-residue protein sequence, read N- to C-terminus: Universal stress protein MJ0531 (170 aa).

It belongs to the universal stress protein A family.

In Methanocaldococcus jannaschii (strain ATCC 43067 / DSM 2661 / JAL-1 / JCM 10045 / NBRC 100440) (Methanococcus jannaschii), this protein is Universal stress protein MJ0531.